The primary structure comprises 262 residues: Taurine import ATP-binding protein TauB (262 aa).

Positions 4–233 constitute an ABC transporter domain; it reads LELERISAQY…RYAAGESARA (230 aa). 38-45 is a binding site for ATP; the sequence is GPSGSGKT.

The protein belongs to the ABC transporter superfamily. Taurine importer (TC 3.A.1.17.1) family. The complex is composed of two ATP-binding proteins (TauB), two transmembrane proteins (TauC) and a solute-binding protein (TauA).

The protein resides in the cell inner membrane. It catalyses the reaction taurine(out) + ATP + H2O = taurine(in) + ADP + phosphate + H(+). Part of the ABC transporter complex TauABC involved in taurine import. Responsible for energy coupling to the transport system. This chain is Taurine import ATP-binding protein TauB, found in Pseudomonas putida (strain ATCC 47054 / DSM 6125 / CFBP 8728 / NCIMB 11950 / KT2440).